A 248-amino-acid chain; its full sequence is Myelin protein P0 (248 aa).

Residues 1-29 (MAPGAPSSSPSPILAVLLFSSLVLSPAQA) form the signal peptide. Positions 30–143 (IVVYTDREVH…DIVGKTSQVT (114 aa)) constitute an Ig-like V-type domain. Residues 30 to 153 (IVVYTDREVH…LYVFEKVPTR (124 aa)) lie on the Extracellular side of the membrane. A disulfide bond links Cys50 and Cys127. N-linked (GlcNAc...) (complex) asparagine glycosylation occurs at Asn122. The chain crosses the membrane as a helical span at residues 154-179 (YGVVLGAVIGGVLGVVLLLLLLFYVV). At 180 to 248 (RYCWLRRQAA…GLGESRKDKK (69 aa)) the chain is on the cytoplasmic side. Ser210 carries the phosphoserine; by PKC modification. The segment at 224 to 248 (DHSRSTKAVSEKKAKGLGESRKDKK) is disordered. A phosphoserine mark is found at Ser226 and Ser228. 2 positions are modified to phosphoserine; by PKC: Ser233 and Ser243.

The protein belongs to the myelin P0 protein family. In terms of assembly, homodimer and homotetramer. N-glycosylated; contains sulfate-substituted glycan. In terms of tissue distribution, found only in peripheral nervous system Schwann cells.

It is found in the cell membrane. Its subcellular location is the myelin membrane. Is an adhesion molecule necessary for normal myelination in the peripheral nervous system. It mediates adhesion between adjacent myelin wraps and ultimately drives myelin compaction. The sequence is that of Myelin protein P0 (MPZ) from Homo sapiens (Human).